The sequence spans 191 residues: MSLIRPALVLFILLTLLTGGVYPLLTTSLGQWWFNSQANGSLIRLNGEVRGSGLIGQNYTAAGYFQGRPSATAETADNPMASGGSNLAASNPALDKAVSERVQALRAANPDADPRVPVELVTTSASGLDNNLTPAAALWQVPRVAKARQLSVEQVSQLVNQATQTPLLSFLGQPVVNILQLNMALDALKDK.

A helical membrane pass occupies residues 6 to 26 (PALVLFILLTLLTGGVYPLLT).

Belongs to the KdpC family. As to quaternary structure, the system is composed of three essential subunits: KdpA, KdpB and KdpC.

Its subcellular location is the cell inner membrane. In terms of biological role, part of the high-affinity ATP-driven potassium transport (or Kdp) system, which catalyzes the hydrolysis of ATP coupled with the electrogenic transport of potassium into the cytoplasm. This subunit acts as a catalytic chaperone that increases the ATP-binding affinity of the ATP-hydrolyzing subunit KdpB by the formation of a transient KdpB/KdpC/ATP ternary complex. The sequence is that of Potassium-transporting ATPase KdpC subunit from Klebsiella pneumoniae (strain 342).